We begin with the raw amino-acid sequence, 87 residues long: MGGMSITHWIVVAVVVMIFFGKGRFSDMMGDVAKGIKSFKKGMSEDDTTPPAAPPAPAPRLENQPLPPENTTQNVAQNVPNDIKNNQ.

Residues 1-21 traverse the membrane as a helical segment; that stretch reads MGGMSITHWIVVAVVVMIFFG. The tract at residues 40–87 is disordered; it reads KKGMSEDDTTPPAAPPAPAPRLENQPLPPENTTQNVAQNVPNDIKNNQ. The span at 69–87 shows a compositional bias: polar residues; the sequence is ENTTQNVAQNVPNDIKNNQ.

It belongs to the TatA/E family. The Tat system comprises two distinct complexes: a TatABC complex, containing multiple copies of TatA, TatB and TatC subunits, and a separate TatA complex, containing only TatA subunits. Substrates initially bind to the TatABC complex, which probably triggers association of the separate TatA complex to form the active translocon.

The protein resides in the cell inner membrane. In terms of biological role, part of the twin-arginine translocation (Tat) system that transports large folded proteins containing a characteristic twin-arginine motif in their signal peptide across membranes. TatA could form the protein-conducting channel of the Tat system. This Zymomonas mobilis subsp. mobilis (strain ATCC 31821 / ZM4 / CP4) protein is Sec-independent protein translocase protein TatA.